Consider the following 219-residue polypeptide: uncharacterized protein (219 aa).

The signal sequence occupies residues 1 to 17 (MFKKIIILFLGIFLLSS). C18 carries N-palmitoyl cysteine lipidation. The S-diacylglycerol cysteine moiety is linked to residue C18. Residues 110-136 (KAESNATQSNNDMTLSKANKKVRKDDS) are disordered. Residues 112–126 (ESNATQSNNDMTLSK) show a composition bias toward polar residues. A coiled-coil region spans residues 137-165 (YKEKKIEEELNQIKAMLRETKRDITKYTC).

The protein localises to the cell membrane. This is an uncharacterized protein from Rickettsia prowazekii (strain Madrid E).